Consider the following 258-residue polypeptide: UPF0328 protein ECU02_0090 (258 aa).

It belongs to the UPF0328 family.

The sequence is that of UPF0328 protein ECU02_0090 from Encephalitozoon cuniculi (strain GB-M1) (Microsporidian parasite).